The sequence spans 289 residues: Acetyl-coenzyme A carboxylase carboxyl transferase subunit beta (289 aa).

The CoA carboxyltransferase N-terminal domain maps to 28–289; it reads VMTKCPKCKK…QGGEMAVWQS (262 aa). Positions 32, 35, 51, and 54 each coordinate Zn(2+). The C4-type zinc-finger motif lies at 32 to 54; the sequence is CPKCKKIMYTKEVLKNLKVCVNC.

Belongs to the AccD/PCCB family. As to quaternary structure, acetyl-CoA carboxylase is a heterohexamer composed of biotin carboxyl carrier protein (AccB), biotin carboxylase (AccC) and two subunits each of ACCase subunit alpha (AccA) and ACCase subunit beta (AccD). Zn(2+) serves as cofactor.

It is found in the cytoplasm. It catalyses the reaction N(6)-carboxybiotinyl-L-lysyl-[protein] + acetyl-CoA = N(6)-biotinyl-L-lysyl-[protein] + malonyl-CoA. It participates in lipid metabolism; malonyl-CoA biosynthesis; malonyl-CoA from acetyl-CoA: step 1/1. Functionally, component of the acetyl coenzyme A carboxylase (ACC) complex. Biotin carboxylase (BC) catalyzes the carboxylation of biotin on its carrier protein (BCCP) and then the CO(2) group is transferred by the transcarboxylase to acetyl-CoA to form malonyl-CoA. The polypeptide is Acetyl-coenzyme A carboxylase carboxyl transferase subunit beta (Bacillus cereus (strain ZK / E33L)).